The following is a 377-amino-acid chain: Succinyl-diaminopimelate desuccinylase (377 aa).

H67 contacts Zn(2+). Residue D69 is part of the active site. D100 contributes to the Zn(2+) binding site. Catalysis depends on E134, which acts as the Proton acceptor. Zn(2+) contacts are provided by E135, E163, and H349.

It belongs to the peptidase M20A family. DapE subfamily. In terms of assembly, homodimer. Zn(2+) serves as cofactor. Co(2+) is required as a cofactor.

The catalysed reaction is N-succinyl-(2S,6S)-2,6-diaminopimelate + H2O = (2S,6S)-2,6-diaminopimelate + succinate. It functions in the pathway amino-acid biosynthesis; L-lysine biosynthesis via DAP pathway; LL-2,6-diaminopimelate from (S)-tetrahydrodipicolinate (succinylase route): step 3/3. In terms of biological role, catalyzes the hydrolysis of N-succinyl-L,L-diaminopimelic acid (SDAP), forming succinate and LL-2,6-diaminopimelate (DAP), an intermediate involved in the bacterial biosynthesis of lysine and meso-diaminopimelic acid, an essential component of bacterial cell walls. In Actinobacillus pleuropneumoniae serotype 5b (strain L20), this protein is Succinyl-diaminopimelate desuccinylase.